Here is a 175-residue protein sequence, read N- to C-terminus: Enhancer of mRNA-decapping protein 1 (175 aa).

A compositionally biased stretch (polar residues) spans methionine 1–lysine 27. Disordered regions lie at residues methionine 1 to threonine 113 and glycine 155 to leucine 175. An N-acetylserine modification is found at serine 2. Residues alanine 35 to asparagine 47 show a composition bias toward low complexity. Polar residues predominate over residues leucine 58 to asparagine 77. Serine 82 bears the Phosphoserine mark. Over residues asparagine 100–threonine 113 the composition is skewed to basic and acidic residues.

Belongs to the EDC family.

Its subcellular location is the cytoplasm. Functionally, mRNA-binding protein which stimulates mRNA decapping by DCP1 and DCP2. Involved in the regulation of expression of multiple genes involved in glycolysis and gluconeogenesis. The chain is Enhancer of mRNA-decapping protein 1 (EDC1) from Saccharomyces cerevisiae (strain ATCC 204508 / S288c) (Baker's yeast).